An 87-amino-acid polypeptide reads, in one-letter code: Toxin CsEv3 (87 aa).

Residues 1 to 19 (MNSLLMITACLFLIGTVWA) form the signal peptide. In terms of domain architecture, LCN-type CS-alpha/beta spans 20 to 85 (KEGYLVNKST…TYPLPNKSCG (66 aa)). Cystine bridges form between C31–C84, C35–C60, C44–C65, and C48–C67. C84 is subject to Cysteine amide.

Belongs to the long (4 C-C) scorpion toxin superfamily. Sodium channel inhibitor family. Beta subfamily. As to expression, expressed by the venom gland.

Its subcellular location is the secreted. Beta toxins bind voltage-independently at site-4 of sodium channels (Nav) and shift the voltage of activation toward more negative potentials thereby affecting sodium channel activation and promoting spontaneous and repetitive firing. Induces immediate paralysis in crickets after injection, with a total paralysis occurring within 15-30 minutes and lasting for 1-2 hours. Is also lethal to vertebrate (chicks) when injected in very high dosages (more that 100 mg/kg). In Centruroides sculpturatus (Arizona bark scorpion), this protein is Toxin CsEv3.